The sequence spans 526 residues: Organic cation/carnitine transporter 4 (526 aa).

Residues 1-52 (MESPEDRNGNDVRQPLLEKIPVKKEAEGEERLCIDEMLQRYCGEFGRWQLKH) lie on the Cytoplasmic side of the membrane. Residues 53 to 73 (FVLTCIAWALEAFHTMVMIFA) traverse the membrane as a helical segment. Over 74–123 (DQEPEWRCVGSDCRVGSLNCELDPSSWEWTAGKGSSTVSEWGLICGDKYK) the chain is Extracellular. A helical transmembrane segment spans residues 124–144 (VGLVQALFFAGCMIGAGVFGH). At 145 to 153 (LSDSKLGRK) the chain is on the cytoplasmic side. A helical transmembrane segment spans residues 154–174 (GSLTVVCIINAIFGIATAFSP). Topologically, residues 175–179 (NYWTY) are extracellular. Residues 180–200 (VVLRFLTGFSTGGVGLTAFVL) traverse the membrane as a helical segment. Residue 201–208 (ATEPIGPS) participates in ATP binding. Topologically, residues 201–214 (ATEPIGPSKRGVAG) are cytoplasmic. The chain crosses the membrane as a helical span at residues 215–235 (MSTFYFFSAGIAVLSGIAYVF). Residues 236 to 240 (RSWRE) are Extracellular-facing. A helical transmembrane segment spans residues 241–261 (LFIVSSLPSLLFLLIVIPFIS). Residues 262 to 331 (ESPRWYLVRG…ILSPLMRMRL (70 aa)) are Cytoplasmic-facing. A helical transmembrane segment spans residues 332-352 (VISVAISFTVSIVYYGLSLNV). Over 353 to 360 (GNLKTNLY) the chain is Extracellular. A helical transmembrane segment spans residues 361–381 (LNVFVNAVSEMPAFAITAVLL). The Cytoplasmic portion of the chain corresponds to 382 to 390 (DKYGRKPLS). A helical membrane pass occupies residues 391–411 (IGTQWFSCVFCLVGFSVWGAG). Residues 412–418 (PWKSVRM) lie on the Extracellular side of the membrane. A helical transmembrane segment spans residues 419 to 439 (VSGVLGIFGMAGTYNLLFIYI). Residues 440–451 (AELFPTVVRNAA) lie on the Cytoplasmic side of the membrane. Residues 452 to 472 (LGCATQAAQMGAILAPFVVVL) form a helical membrane-spanning segment. Residues 473–475 (GEE) lie on the Extracellular side of the membrane. Residues 476–496 (LPFGVFAVCGLVGGGLAFYLP) form a helical membrane-spanning segment. At 497–526 (ETLNKPLYDTMFGMHEAESESNRERGEVIC) the chain is on the cytoplasmic side.

This sequence belongs to the major facilitator (TC 2.A.1) superfamily. Organic cation transporter (TC 2.A.1.19) family. As to expression, mostly expressed in siliques, and, to a lower extent, in stems, leaves, flowers and siliques. Present in pollen. In the stems of secondary inflorescences present in the phloem cells and xylem parenchyma cells.

The protein resides in the vacuole membrane. Its function is as follows. High affinity carnitine transporter involved in the active cellular uptake of carnitine. Also transports organic cations. The sequence is that of Organic cation/carnitine transporter 4 (OCT4) from Arabidopsis thaliana (Mouse-ear cress).